A 50-amino-acid chain; its full sequence is MGQKWKLYEIKDGKVIRKNKFCPRCGPGVFMADHGDRWACGKCGYTEWKK.

The Zn(2+) site is built by Cys-22, Cys-25, Cys-40, and Cys-43. A C4-type zinc finger spans residues 22-43; the sequence is CPRCGPGVFMADHGDRWACGKC.

Belongs to the eukaryotic ribosomal protein eS31 family. As to quaternary structure, part of the 30S ribosomal subunit. Zn(2+) serves as cofactor.

This Pyrococcus furiosus (strain ATCC 43587 / DSM 3638 / JCM 8422 / Vc1) protein is Small ribosomal subunit protein eS31.